The sequence spans 677 residues: AP-2 complex subunit beta (677 aa).

The interval 597-677 (RLRTRDSNPS…PMTPETHLMD (81 aa)) is disordered. A compositionally biased stretch (basic residues) spans 616-627 (KKYNHFHQKSQT). The segment covering 636–654 (RNSWNPSPFSDESNSNTFS) has biased composition (polar residues).

Belongs to the adaptor complexes large subunit family. Adaptor protein complex 2 (AP-2) is a heterotetramer composed of two large adaptins (alpha-type subunit apl3 and beta-type subunit apl1), a medium chain (mu-type subunit apm4) and a small adaptin (sigma-type subunit aps2).

The protein localises to the cell membrane. Its subcellular location is the membrane. The protein resides in the coated pit. Functionally, adaptins are components of the adaptor complexes which link clathrin to receptors in coated vesicles. Clathrin-associated protein complexes are believed to interact with the cytoplasmic tails of membrane proteins, leading to their selection and concentration. Beta adaptin is a subunit of the plasma membrane adaptor. This chain is AP-2 complex subunit beta (apl1), found in Schizosaccharomyces pombe (strain 972 / ATCC 24843) (Fission yeast).